The chain runs to 415 residues: Maltose excess protein 1, chloroplastic (415 aa).

The disordered stretch occupies residues 74–93 (SESDSDSDFPHENQQGNPGL). A run of 9 helical transmembrane segments spans residues 139–159 (ALSA…LSLL), 176–196 (LGVV…AMPI), 199–219 (FVAT…YYFG), 231–251 (DVIT…TFVP), 252–272 (LVPN…AAII), 286–306 (FVGS…PVSQ), 322–342 (SITM…ALFI), 345–365 (LMWL…NILC), and 373–393 (SQSF…LALW).

Expressed in leaves and roots. Expressed in root cap cells.

It localises to the plastid. Its subcellular location is the chloroplast inner membrane. Probable maltose transporter. Essential for the conversion of starch to sucrose in leaves at night, probably via the export of maltose from the chloroplast. Required for root cap cells formation. This Arabidopsis thaliana (Mouse-ear cress) protein is Maltose excess protein 1, chloroplastic (MEX1).